Reading from the N-terminus, the 282-residue chain is 5'-nucleotidase SurE (282 aa).

Residues Asp-12, Asp-13, Ser-43, and Asn-98 each contribute to the a divalent metal cation site.

Belongs to the SurE nucleotidase family. It depends on a divalent metal cation as a cofactor.

The protein resides in the cytoplasm. It carries out the reaction a ribonucleoside 5'-phosphate + H2O = a ribonucleoside + phosphate. Nucleotidase that shows phosphatase activity on nucleoside 5'-monophosphates. The polypeptide is 5'-nucleotidase SurE (Hyperthermus butylicus (strain DSM 5456 / JCM 9403 / PLM1-5)).